Consider the following 132-residue polypeptide: Agouti-signaling protein (132 aa).

Residues 1–22 form the signal peptide; it reads MDVTRLLLATLLVFLCFFTAYS. An N-linked (GlcNAc...) asparagine glycan is attached at asparagine 39. Residues 57-88 form a disordered region; that stretch reads KKSKQTSRKEAEKKRSSKKEASMKKVARPRTP. The span at 63 to 79 shows a compositional bias: basic and acidic residues; it reads SRKEAEKKRSSKKEASM. 5 disulfides stabilise this stretch: cysteine 93/cysteine 108, cysteine 100/cysteine 114, cysteine 107/cysteine 125, cysteine 111/cysteine 132, and cysteine 116/cysteine 123. Positions 93–132 constitute an Agouti domain; sequence CVATRDSCKPPAPACCDPCASCQCRFFRSACSCRVLSLNC.

It localises to the secreted. Its function is as follows. Involved in the regulation of melanogenesis. The binding of ASP to MC1R precludes alpha-MSH initiated signaling and thus blocks production of cAMP, leading to a down-regulation of eumelanogenesis (brown/black pigment) and thus increasing synthesis of pheomelanin (yellow/red pigment). The protein is Agouti-signaling protein (ASIP) of Macaca assamensis (Assam macaque).